A 119-amino-acid polypeptide reads, in one-letter code: Large ribosomal subunit protein bL20 (119 aa).

It belongs to the bacterial ribosomal protein bL20 family.

Its function is as follows. Binds directly to 23S ribosomal RNA and is necessary for the in vitro assembly process of the 50S ribosomal subunit. It is not involved in the protein synthesizing functions of that subunit. This chain is Large ribosomal subunit protein bL20, found in Geobacillus sp. (strain WCH70).